The sequence spans 348 residues: Hereditary hemochromatosis protein homolog (348 aa).

A signal peptide spans 1–22; it reads MGPRARPALFFLILLRTVAAQG. The tract at residues 23–114 is alpha-1; it reads RPPRSHSLRY…IMDNHNHSKE (92 aa). At 23–306 the chain is on the extracellular side; that stretch reads RPPRSHSLRY…WEPSLSNTLV (284 aa). Asparagine 110, asparagine 130, and asparagine 234 each carry an N-linked (GlcNAc...) asparagine glycan. The tract at residues 115 to 205 is alpha-2; that stretch reads SHTLQVILGC…ELGRGVLDQQ (91 aa). Intrachain disulfides connect cysteine 124/cysteine 187 and cysteine 225/cysteine 282. The segment at 206-297 is alpha-3; that stretch reads VPPLVKVTHH…GLDQPLTATW (92 aa). An Ig-like C1-type domain is found at 207 to 296; the sequence is PPLVKVTHHV…PGLDQPLTAT (90 aa). Residues 298 to 306 form a connecting peptide region; it reads EPSLSNTLV. Residues 307 to 330 traverse the membrane as a helical segment; that stretch reads TGVISGIAVCVIIFFIGILFRILR. At 331 to 348 the chain is on the cytoplasmic side; sequence KRQASRGAMGDYVLGECE.

This sequence belongs to the MHC class I family. Binds TFR through the extracellular domain in a pH-dependent manner.

Its subcellular location is the cell membrane. Binds to transferrin receptor (TFR) and reduces its affinity for iron-loaded transferrin. The sequence is that of Hereditary hemochromatosis protein homolog (HFE) from Ceratotherium simum (White rhinoceros).